The primary structure comprises 529 residues: Inosine-5'-monophosphate dehydrogenase (529 aa).

CBS domains follow at residues Met129–Val185 and Met189–Thr246. Residues Asp283 and Gly334–Gly336 each bind NAD(+). K(+)-binding residues include Gly336 and Gly338. Ser339 serves as a coordination point for IMP. Cys341 contacts K(+). Cys341 (thioimidate intermediate) is an active-site residue. IMP-binding positions include Asp374–Gly376, Gly397–Ser398, and Tyr421–Gly425. Arg443 serves as the catalytic Proton acceptor. Glu458 serves as a coordination point for IMP. Glu511, Ser512, and His513 together coordinate K(+).

It belongs to the IMPDH/GMPR family. As to quaternary structure, homotetramer. Requires K(+) as cofactor.

The catalysed reaction is IMP + NAD(+) + H2O = XMP + NADH + H(+). The protein operates within purine metabolism; XMP biosynthesis via de novo pathway; XMP from IMP: step 1/1. With respect to regulation, mycophenolic acid (MPA) is a non-competitive inhibitor that prevents formation of the closed enzyme conformation by binding to the same site as the amobile flap. In contrast, mizoribine monophosphate (MZP) is a competitive inhibitor that induces the closed conformation. MPA is a potent inhibitor of mammalian IMPDHs but a poor inhibitor of the bacterial enzymes. MZP is a more potent inhibitor of bacterial IMPDH. Its function is as follows. Catalyzes the conversion of inosine 5'-phosphate (IMP) to xanthosine 5'-phosphate (XMP), the first committed and rate-limiting step in the de novo synthesis of guanine nucleotides, and therefore plays an important role in the regulation of cell growth. The sequence is that of Inosine-5'-monophosphate dehydrogenase from Mycobacterium bovis (strain ATCC BAA-935 / AF2122/97).